A 279-amino-acid polypeptide reads, in one-letter code: Protein K1 (279 aa).

The N-terminal stretch at Met1–Ser18 is a signal peptide. Over Leu19–Leu220 the chain is Extracellular. Residues Val221–Phe241 form a helical membrane-spanning segment. The Cytoplasmic portion of the chain corresponds to Ala242–Tyr279.

As to quaternary structure, homooligomer.

The protein localises to the host membrane. Promotes host cell survival pathways and may contribute to pathogenesis by preventing infected cells from undergoing apoptosis. Acts in host B-cells by mimicking the activated B-cell receptor complex. The cytoplasmic tail of K1 can induce the phosphorylation of a number of different kinases, leading to the activation of survival signaling pathways. The polypeptide is Protein K1 (K1) (Human herpesvirus 8 type P (isolate GK18) (HHV-8)).